The following is a 711-amino-acid chain: Polyribonucleotide nucleotidyltransferase (711 aa).

Mg(2+) is bound by residues Asp-490 and Asp-496. The KH domain occupies 556-615 (PRIETMQVPTDKIREVIGSGGKVIREIVEVSGAKVDINDDGVIKIASANGEAIQKAYDMI). Residues 625-693 (GAVYTGKVVK…DRGKVRLSMK (69 aa)) form the S1 motif domain.

Belongs to the polyribonucleotide nucleotidyltransferase family. The cofactor is Mg(2+).

It localises to the cytoplasm. The catalysed reaction is RNA(n+1) + phosphate = RNA(n) + a ribonucleoside 5'-diphosphate. In terms of biological role, involved in mRNA degradation. Catalyzes the phosphorolysis of single-stranded polyribonucleotides processively in the 3'- to 5'-direction. This is Polyribonucleotide nucleotidyltransferase from Ruegeria sp. (strain TM1040) (Silicibacter sp.).